The sequence spans 324 residues: Aprataxin (324 aa).

Positions 23 to 72 (SVTLGRGPDTKIKDKKCSREQVELRADCNRGFVTVKQLGVNPTLVDDVVV) constitute an FHA-like domain. The disordered stretch occupies residues 100-160 (TEDTSRSKPS…QGLKASMQDP (61 aa)). Positions 111-125 (RAQQIQSPTKTTADV) are enriched in polar residues. The HIT domain occupies 150–255 (SQGLKASMQD…ISQDFDSPCL (106 aa)). Interaction with DNA substrate regions lie at residues 175–179 (DKYPK) and 237–238 (SM). A Histidine triad motif motif is present at residues 240 to 244 (HVHLH). H242 functions as the Tele-AMP-histidine intermediate in the catalytic mechanism. The segment at 299 to 321 (LRCHVCGKEQTTIPKLKDHLKTH) adopts a C2H2-type zinc-finger fold.

The protein resides in the nucleus. It localises to the nucleoplasm. The protein localises to the nucleolus. The enzyme catalyses a 5'-end adenosine-5'-diphospho-5'-2'-deoxyribonucleoside-DNA + H2O = a 5'-end 5'-phospho-2'-deoxyribonucleoside-DNA + AMP + 2 H(+). It catalyses the reaction a 5'-end adenosine-5'-diphospho-5'-ribonucleoside-2'-deoxyribonucleotide-DNA + H2O = a 5'-end 5'-phospho-ribonucleoside-2'-deoxyribonucleotide-DNA + AMP + 2 H(+). It carries out the reaction a 3'-end 2'-deoxyribonucleotide-3'-diphospho-5'-guanosine-DNA + H2O = a 3'-end 2'-deoxyribonucleotide 3'-phosphate-DNA + GMP + 2 H(+). DNA-binding protein involved in single-strand DNA break repair, double-strand DNA break repair and base excision repair. Resolves abortive DNA ligation intermediates formed either at base excision sites, or when DNA ligases attempt to repair non-ligatable breaks induced by reactive oxygen species. Catalyzes the release of adenylate groups covalently linked to 5'-phosphate termini, resulting in the production of 5'-phosphate termini that can be efficiently rejoined. Also able to hydrolyze adenosine 5'-monophosphoramidate (AMP-NH(2)) and diadenosine tetraphosphate (AppppA), but with lower catalytic activity. Likewise, catalyzes the release of 3'-linked guanosine (DNAppG) and inosine (DNAppI) from DNA, but has higher specific activity with 5'-linked adenosine (AppDNA). This chain is Aprataxin (aptx), found in Danio rerio (Zebrafish).